The primary structure comprises 422 residues: Steroid hormone receptor ERR1 (422 aa).

The segment at M1 to G67 is disordered. Phosphoserine occurs at positions 19 and 22. Gly residues predominate over residues G58–G67. A DNA-binding region (nuclear receptor) is located at residues K76–L151. 2 NR C4-type zinc fingers span residues C79–C99 and C115–C134. An N6-acetyllysine; by PCAF/KAT2B mark is found at K129, K138, K160, and K162. Glycyl lysine isopeptide (Lys-Gly) (interchain with G-Cter in SUMO2) cross-links involve residues K189 and K402. The NR LBD domain maps to P192–M420.

Belongs to the nuclear hormone receptor family. NR3 subfamily. As to quaternary structure, binds DNA as a monomer or a homodimer. Interacts (via the AF2 domain) with coactivator PPARGC1A (via the L3 motif); the interaction greatly enhances transcriptional activity of genes involved in energy metabolism. Interacts with PIAS4; the interaction enhances sumoylation. Interacts with MAPK15; promotes re-localization of ESRRA to the cytoplasm through a XPO1-dependent mechanism then inhibits ESRRA transcriptional activity. In terms of processing, phosphorylation on Ser-19 enhances sumoylation on Lys-14 increasing repression of transcriptional activity. Post-translationally, sumoylated with SUMO2. Main site is Lys-14 which is enhanced by phosphorylation on Ser-19, cofactor activation, and by interaction with PIAS4. Sumoylation enhances repression of transcriptional activity, but has no effect on subcellular location nor on DNA binding. Reversibly acetylated. Acetylation by PCAF/KAT2 at Lys-129, Lys-138, Lys-160 and Lys-162 and PCAF/KAT2 decreases transcriptional activity probably by inhibiting DNA-binding activity; deacetylation involves SIRT1 and HDAC8 and increases DNA-binding.

Its subcellular location is the nucleus. It localises to the cytoplasm. Binds to an ERR-alpha response element (ERRE) containing a single consensus half-site, 5'-TNAAGGTCA-3'. Can bind to the medium-chain acyl coenzyme A dehydrogenase (MCAD) response element NRRE-1 and may act as an important regulator of MCAD promoter. May function as a modulator of the estrogen signaling pathway in the uterus. Induces the expression of PERM1 in the skeletal muscle. In Canis lupus familiaris (Dog), this protein is Steroid hormone receptor ERR1 (ESRRA).